The chain runs to 380 residues: Erythronate-4-phosphate dehydrogenase (380 aa).

2 residues coordinate substrate: S45 and T66. Residues D146, T174, 205–207 (ASR), and D231 each bind NAD(+). R207 is a catalytic residue. The active site involves E236. H253 (proton donor) is an active-site residue. G256 contacts NAD(+). Y257 provides a ligand contact to substrate.

The protein belongs to the D-isomer specific 2-hydroxyacid dehydrogenase family. PdxB subfamily. In terms of assembly, homodimer.

It is found in the cytoplasm. The enzyme catalyses 4-phospho-D-erythronate + NAD(+) = (R)-3-hydroxy-2-oxo-4-phosphooxybutanoate + NADH + H(+). The protein operates within cofactor biosynthesis; pyridoxine 5'-phosphate biosynthesis; pyridoxine 5'-phosphate from D-erythrose 4-phosphate: step 2/5. Catalyzes the oxidation of erythronate-4-phosphate to 3-hydroxy-2-oxo-4-phosphonooxybutanoate. This Pseudomonas putida (strain GB-1) protein is Erythronate-4-phosphate dehydrogenase.